Reading from the N-terminus, the 694-residue chain is Phosphatase and actin regulator 4-A (694 aa).

Basic and acidic residues-rich tracts occupy residues 1 to 13 (MEDRSEEGGDHSE) and 46 to 72 (SSDSFRETSEVLERKISTRKPREELIK). 5 disordered regions span residues 1-29 (MEDRSEEGGDHSEMPSAPSTPPSKRKSKF), 42-169 (RKRK…QPLP), 192-403 (VNEV…HIRI), 426-445 (LFMQNDMGPSEEGTRVRSLP), and 450-572 (LLKV…QIRQ). The RPEL 1 repeat unit spans residues 55-80 (EVLERKISTRKPREELIKRGLLVEVP). Residues 240–267 (SISTSVTQESAVAGQKSDSSNRLQSSAP) show a composition bias toward polar residues. Positions 300–317 (AELSLALAGSPLSPAGSR) are enriched in low complexity. Pro residues-rich tracts occupy residues 318–327 (PSPPLPPKRA) and 372–381 (SNPPVPPLTL). Acidic residues-rich tracts occupy residues 455–467 (DDEDDESLEDESL), 499–511 (QEEEEGGVSDTDS), and 519–529 (DDEEEEEEEET). RPEL repeat units lie at residues 576–601 (TQLNRRLSQRPTAEELEQRNILQKNE) and 613–638 (RRLTRKLSQRPTVAELVERKILRFNE).

This sequence belongs to the phosphatase and actin regulator family. As to quaternary structure, binds ppp1ca and actin.

It localises to the cytoplasm. It is found in the cell projection. The protein localises to the lamellipodium. In terms of biological role, regulator of protein phosphatase 1 (PP1) required for neural tube and optic fissure closure, and enteric neural crest cell (ENCCs) migration during development. Acts as an activator of PP1. During neural tube closure, localizes to the ventral neural tube and activates PP1, leading to down-regulate cell proliferation within cranial neural tissue and the neural retina. Also acts as a regulator of migration of enteric neural crest cells (ENCCs) by activating PP1, leading to repression of the integrin signaling through the rho/rock pathway. This chain is Phosphatase and actin regulator 4-A (phactr4-a), found in Xenopus laevis (African clawed frog).